A 514-amino-acid polypeptide reads, in one-letter code: Sugar transport protein 4 (514 aa).

Over 1-22 the chain is Cytoplasmic; sequence MAGGFVSQTPGVRNYNYKLTPK. Helical transmembrane passes span 23–43, 80–100, 117–137, 140–160, 172–192, 202–222, 283–303, 321–341, 348–368, 387–407, 426–446, and 451–471; these read VFVTCFIGAFGGLIFGYDLGI, LLTLFTSSLYVAALVSSLFAS, FTFFIGSAFNGFAQNIAMLLI, ILLGFGVGFANQSVPVYLSEM, GFQVAIIFGIVVATIINYFTA, ISLGLACVPAVMIMIGALILP, LIMTCFIPFFQQLTGINVITF, LSAMVTGIIELLCTFVSVFTV, ILFLQGGIQMLVSQIAIGAMI, LIVALICIYVAGFAWSWGPLG, INVSVNMFFTFLVAQLFLTML, and FGLFFFFAFFVVIMTIFIYLM. The Cytoplasmic portion of the chain corresponds to 472 to 514; sequence LPETKNVPIEEMNRVWKAHWFWGKFIPDEAVNMGAAEMQQKSV.

The protein belongs to the major facilitator superfamily. Sugar transporter (TC 2.A.1.1) family. Mostly in flowers and roots, especially in anthers, including pollen, and root tips. Also present in some hydathodes.

It localises to the cell membrane. Mediates an active uptake of hexoses, probably by sugar/hydrogen symport. Can transport glucose, methylglucose, galactose, xylose and mannose, but not fructose. In Arabidopsis thaliana (Mouse-ear cress), this protein is Sugar transport protein 4 (STP4).